The sequence spans 317 residues: Protoheme IX farnesyltransferase (317 aa).

A run of 9 helical transmembrane segments spans residues 36–56, 57–77, 108–128, 129–149, 157–177, 184–204, 230–247, 251–273, and 284–304; these read VMVLVIFTALVGMVVSDATVN, PVIAAISLLMIAVGAGASGCL, LAFGIVLSVGSVLILGLASNW, LAAGLLAFTIVFYAVIYSMWL, IVIGGAAGALPPVVGQAAVTG, LVLFAIIFIWTPPHFWALALV, IVWYSLLLAPLALVPVWL, GWLYAVVGVLGGLGMLAGAVQVY, and AAMGLFAFSILYLFLLFSALL.

This sequence belongs to the UbiA prenyltransferase family. Protoheme IX farnesyltransferase subfamily.

Its subcellular location is the cell inner membrane. It carries out the reaction heme b + (2E,6E)-farnesyl diphosphate + H2O = Fe(II)-heme o + diphosphate. It functions in the pathway porphyrin-containing compound metabolism; heme O biosynthesis; heme O from protoheme: step 1/1. Converts heme B (protoheme IX) to heme O by substitution of the vinyl group on carbon 2 of heme B porphyrin ring with a hydroxyethyl farnesyl side group. The sequence is that of Protoheme IX farnesyltransferase from Methylorubrum populi (strain ATCC BAA-705 / NCIMB 13946 / BJ001) (Methylobacterium populi).